The primary structure comprises 484 residues: tRNA-2-methylthio-N(6)-dimethylallyladenosine synthase (484 aa).

The region spanning 36 to 153 (GKLYIKTHGC…LPELIRARRE (118 aa)) is the MTTase N-terminal domain. [4Fe-4S] cluster contacts are provided by Cys-45, Cys-82, Cys-116, Cys-190, Cys-194, and Cys-197. The Radical SAM core domain maps to 176 to 415 (RAEGPSAFVS…HISAHAASIS (240 aa)). One can recognise a TRAM domain in the interval 416-479 (QSMVGSVQRV…SNSLRGRIQL (64 aa)). A disordered region spans residues 428-450 (EGPSRRDPNELTGKSENMRPVNF).

Belongs to the methylthiotransferase family. MiaB subfamily. Monomer. [4Fe-4S] cluster is required as a cofactor.

Its subcellular location is the cytoplasm. The enzyme catalyses N(6)-dimethylallyladenosine(37) in tRNA + (sulfur carrier)-SH + AH2 + 2 S-adenosyl-L-methionine = 2-methylsulfanyl-N(6)-dimethylallyladenosine(37) in tRNA + (sulfur carrier)-H + 5'-deoxyadenosine + L-methionine + A + S-adenosyl-L-homocysteine + 2 H(+). Catalyzes the methylthiolation of N6-(dimethylallyl)adenosine (i(6)A), leading to the formation of 2-methylthio-N6-(dimethylallyl)adenosine (ms(2)i(6)A) at position 37 in tRNAs that read codons beginning with uridine. The protein is tRNA-2-methylthio-N(6)-dimethylallyladenosine synthase of Xanthomonas oryzae pv. oryzae (strain MAFF 311018).